A 433-amino-acid polypeptide reads, in one-letter code: Adenylosuccinate synthetase (433 aa).

GTP is bound by residues G11–K17 and G39–T41. D12 (proton acceptor) is an active-site residue. 2 residues coordinate Mg(2+): D12 and G39. IMP contacts are provided by residues D12–K15, N37–H40, T134, R148, N230, T245, and R309. Residue H40 is the Proton donor of the active site. Position 305 to 311 (V305 to R311) interacts with substrate. GTP-binding positions include R311, K337 to D339, and G419 to G421.

Belongs to the adenylosuccinate synthetase family. As to quaternary structure, homodimer. It depends on Mg(2+) as a cofactor.

The protein resides in the cytoplasm. It catalyses the reaction IMP + L-aspartate + GTP = N(6)-(1,2-dicarboxyethyl)-AMP + GDP + phosphate + 2 H(+). Its pathway is purine metabolism; AMP biosynthesis via de novo pathway; AMP from IMP: step 1/2. Plays an important role in the de novo pathway and in the salvage pathway of purine nucleotide biosynthesis. Catalyzes the first committed step in the biosynthesis of AMP from IMP. This is Adenylosuccinate synthetase from Eremothecium gossypii (strain ATCC 10895 / CBS 109.51 / FGSC 9923 / NRRL Y-1056) (Yeast).